A 299-amino-acid chain; its full sequence is Acetaldehyde dehydrogenase 1 (299 aa).

Cys-130 functions as the Acyl-thioester intermediate in the catalytic mechanism. NAD(+) is bound by residues 161 to 169 (SVGPGTRKN) and Asn-272.

The protein belongs to the acetaldehyde dehydrogenase family.

It carries out the reaction acetaldehyde + NAD(+) + CoA = acetyl-CoA + NADH + H(+). In Burkholderia cenocepacia (strain ATCC BAA-245 / DSM 16553 / LMG 16656 / NCTC 13227 / J2315 / CF5610) (Burkholderia cepacia (strain J2315)), this protein is Acetaldehyde dehydrogenase 1 (mhpF).